We begin with the raw amino-acid sequence, 715 residues long: Polyribonucleotide nucleotidyltransferase (715 aa).

Mg(2+) is bound by residues aspartate 488 and aspartate 494. The KH domain occupies 555-614 (PRIEVMHIPTDKIRDVIGTGGKVIREIVEKTGAKINIEDDGTVKIASSNGKEIEAARKWI). The region spanning 624 to 692 (GEIYEGTVVK…ERGKVRLSMK (69 aa)) is the S1 motif domain.

This sequence belongs to the polyribonucleotide nucleotidyltransferase family. The cofactor is Mg(2+).

It is found in the cytoplasm. The enzyme catalyses RNA(n+1) + phosphate = RNA(n) + a ribonucleoside 5'-diphosphate. Functionally, involved in mRNA degradation. Catalyzes the phosphorolysis of single-stranded polyribonucleotides processively in the 3'- to 5'-direction. The chain is Polyribonucleotide nucleotidyltransferase from Chelativorans sp. (strain BNC1).